Consider the following 616-residue polypeptide: MPKYRSHTTTHGRNMAGARALWRATGMTDDDFGKPIIAVVNSFTQFVPGHVHLRDLGKLVAEQIEASGGVAKEFNTIAVDDGIAMGHGGMLYSLPSRELIADSVEYMVNAHCADAMVCISNCDKITPGMLMASLRLNIPVIFVSGGPMEAGKTKLSDKIIKLDLVDAMIQGANPNVSDADSEQIERSACPTCGSCSGMFTANSMNCLNEALGLALPGNGSLLATHADRKQLFLDAGKHIVELTKRYYEQDDISALPRSIANKAAFENAMTLDIAMGGSTNTVLHLLAAAQEGDIDFDISDIDRLSRKVPHLCKVAPSTQKYHMEDVHRAGGVVGILGELDRAGLLNREVKNVLGLNLPQTLEAYDVMLTKDEGVKQMYSAGPAGIRTTKAFSQDCRFPSLDTDRQEGCIRTREHAYSQDGGLAVLYGNLSENGSIVKTAGVDKDSLTFRGPAKVYESQDDAVAAILGGKVVAGDVVVIRYEGPKGGPGMQEMLYPTTYLKSMGLGKSCALLTDGRFSGGTSGLSIGHASPEAASGGLIALVQDGDIIDIDIPNRAMKLDVSDAELAARREAELARGDAAWTPKARERQVSYALRAYALLATSADKGAVRDKSKLGG.

Aspartate 81 contributes to the Mg(2+) binding site. Cysteine 122 serves as a coordination point for [2Fe-2S] cluster. Mg(2+) contacts are provided by aspartate 123 and lysine 124. Lysine 124 is modified (N6-carboxylysine). [2Fe-2S] cluster is bound at residue cysteine 195. Residue glutamate 491 participates in Mg(2+) binding. Serine 517 serves as the catalytic Proton acceptor.

The protein belongs to the IlvD/Edd family. In terms of assembly, homodimer. Requires [2Fe-2S] cluster as cofactor. Mg(2+) serves as cofactor.

It catalyses the reaction (2R)-2,3-dihydroxy-3-methylbutanoate = 3-methyl-2-oxobutanoate + H2O. It carries out the reaction (2R,3R)-2,3-dihydroxy-3-methylpentanoate = (S)-3-methyl-2-oxopentanoate + H2O. It participates in amino-acid biosynthesis; L-isoleucine biosynthesis; L-isoleucine from 2-oxobutanoate: step 3/4. The protein operates within amino-acid biosynthesis; L-valine biosynthesis; L-valine from pyruvate: step 3/4. Its function is as follows. Functions in the biosynthesis of branched-chain amino acids. Catalyzes the dehydration of (2R,3R)-2,3-dihydroxy-3-methylpentanoate (2,3-dihydroxy-3-methylvalerate) into 2-oxo-3-methylpentanoate (2-oxo-3-methylvalerate) and of (2R)-2,3-dihydroxy-3-methylbutanoate (2,3-dihydroxyisovalerate) into 2-oxo-3-methylbutanoate (2-oxoisovalerate), the penultimate precursor to L-isoleucine and L-valine, respectively. This is Dihydroxy-acid dehydratase from Yersinia enterocolitica serotype O:8 / biotype 1B (strain NCTC 13174 / 8081).